The following is a 142-amino-acid chain: Transcriptional regulator MraZ (142 aa).

2 SpoVT-AbrB domains span residues 5–51 (ASAL…PRPE) and 77–120 (AMDV…DSQT).

This sequence belongs to the MraZ family. In terms of assembly, forms oligomers.

Its subcellular location is the cytoplasm. It is found in the nucleoid. In Burkholderia cenocepacia (strain ATCC BAA-245 / DSM 16553 / LMG 16656 / NCTC 13227 / J2315 / CF5610) (Burkholderia cepacia (strain J2315)), this protein is Transcriptional regulator MraZ.